The chain runs to 2748 residues: Nuclear migration protein NUM1 (2748 aa).

Residues 1 to 10 (MSHNNRHKKN) show a composition bias toward basic residues. Disordered stretches follow at residues 1–36 (MSHN…VSTN) and 290–312 (YYQK…GTTS). Polar residues predominate over residues 17–36 (AGQYANSIDNSLSQESVSTN). A compositionally biased stretch (low complexity) spans 293 to 304 (KQHTSDTTVTSD). A run of 12 repeats spans residues 593–656 (PSLE…KLEQ), 657–727 (PSLE…EVEQ), 728–798 (PSLA…EVEQ), 799–862 (PSLA…KLEQ), 863–926 (PSLA…KLEQ), 927–990 (PSLA…KLEQ), 991–1054 (PSLE…KLEQ), 1055–1118 (PSLE…KLEQ), 1119–1182 (PSLE…KLEQ), 1183–1246 (PSLA…KLEQ), 1247–1310 (PSLA…KLEQ), and 1311–1374 (PSLE…KLEQ). The segment at 593–1384 (PSLEYLVEHA…PSLEYLVKHA (792 aa)) is 13 X tandem repeats. Residues S611, S675, and S746 each carry the phosphoserine modification. A phosphoserine mark is found at S881, S945, and S1009. S1201, S1265, and S1329 each carry phosphoserine. The 13; truncated repeat unit spans residues 1375 to 1384 (PSLEYLVKHA). The disordered stretch occupies residues 2111-2133 (ERAERIDEQSINTTSSNSTTTSS). Residues 2122-2133 (NTTSSNSTTTSS) show a composition bias toward low complexity. S2162, S2164, S2197, S2217, S2220, S2221, S2360, and S2424 each carry phosphoserine. Residues 2444 to 2460 (KEDKKGQATASKHEYVS) show a composition bias toward basic and acidic residues. The segment at 2444 to 2536 (KEDKKGQATA…HSSRNTPASR (93 aa)) is disordered. Residues 2465 to 2474 (NKTSTVSTKS) are compositionally biased toward polar residues. A compositionally biased stretch (basic and acidic residues) spans 2492-2503 (SESHPQIEEQSH). The residue at position 2494 (S2494) is a Phosphoserine. Residues 2504 to 2514 (RTNHHKHHKRQ) show a composition bias toward basic residues. A compositionally biased stretch (low complexity) spans 2516-2532 (SLNSNSTSKTTHSSRNT). S2545 is subject to Phosphoserine. Positions 2573–2683 (QTVIGEYLFK…WYNSLRYLLQ (111 aa)) constitute a PH domain. Residues 2707–2748 (IFPLPGENTKSSSKRLSASRRSVSTRSLRHRVPQSRSFGNLR) are disordered. The segment covering 2720-2730 (KRLSASRRSVS) has biased composition (low complexity).

In terms of assembly, interacts with PAC11 when DYN1 is present, and TUB3.

Its subcellular location is the bud tip. In terms of biological role, controls nuclear migration. NUM1 specifically controls the interaction of the bud neck cytoskeleton with the pre-divisional G2 nucleus. Functions in dynein-anchoring. During late anaphase forms dynein-interacting cortical microtubule capture sites at both cellular poles. This leads to dynein-dependent sliding of the microtubules in the bud. This Saccharomyces cerevisiae (strain ATCC 204508 / S288c) (Baker's yeast) protein is Nuclear migration protein NUM1 (NUM1).